A 457-amino-acid polypeptide reads, in one-letter code: uncharacterized protein (457 aa).

Residue Lys75 is modified to N6-(pyridoxal phosphate)lysine.

The cofactor is pyridoxal 5'-phosphate.

This is an uncharacterized protein from Sinorhizobium fredii (strain NBRC 101917 / NGR234).